We begin with the raw amino-acid sequence, 162 residues long: Sec-independent protein translocase protein TatB (162 aa).

Residues 1 to 21 (MFDLGWTELLVIGVVALIVVG) traverse the membrane as a helical segment. Disordered regions lie at residues 69-111 (ATNP…DRAE) and 124-162 (AADR…ETKA). 2 stretches are compositionally biased toward basic and acidic residues: residues 83–111 (ATRD…DRAE) and 124–141 (AADR…KAEE). The segment covering 144-155 (AALSATPASTAS) has biased composition (low complexity).

It belongs to the TatB family. As to quaternary structure, the Tat system comprises two distinct complexes: a TatABC complex, containing multiple copies of TatA, TatB and TatC subunits, and a separate TatA complex, containing only TatA subunits. Substrates initially bind to the TatABC complex, which probably triggers association of the separate TatA complex to form the active translocon.

It is found in the cell inner membrane. Functionally, part of the twin-arginine translocation (Tat) system that transports large folded proteins containing a characteristic twin-arginine motif in their signal peptide across membranes. Together with TatC, TatB is part of a receptor directly interacting with Tat signal peptides. TatB may form an oligomeric binding site that transiently accommodates folded Tat precursor proteins before their translocation. The protein is Sec-independent protein translocase protein TatB of Ruegeria sp. (strain TM1040) (Silicibacter sp.).